We begin with the raw amino-acid sequence, 494 residues long: Alpha-amylase-related protein (494 aa).

Residues 1-20 (MIKFALALTLCLAGASLSLA) form the signal peptide. Position 21 is a pyrrolidone carboxylic acid (Gln-21). Cys-48 and Cys-104 are oxidised to a cystine. Residues Asn-118, Gln-169, and Asp-178 each coordinate Ca(2+). The cysteines at positions 157 and 171 are disulfide-linked. Chloride is bound at residue Arg-206. Residue Asp-208 is the Nucleophile of the active site. His-212 lines the Ca(2+) pocket. The active-site Proton donor is Glu-245. Chloride-binding residues include Asn-308 and Arg-343. 3 disulfide bridges follow: Cys-376/Cys-382, Cys-418/Cys-441, and Cys-448/Cys-460.

It belongs to the glycosyl hydrolase 13 family. As to quaternary structure, monomer. Ca(2+) is required as a cofactor. Requires chloride as cofactor.

Its subcellular location is the secreted. The catalysed reaction is Endohydrolysis of (1-&gt;4)-alpha-D-glucosidic linkages in polysaccharides containing three or more (1-&gt;4)-alpha-linked D-glucose units.. The sequence is that of Alpha-amylase-related protein (Amyrel) from Drosophila auraria (Fruit fly).